We begin with the raw amino-acid sequence, 156 residues long: MSQELTINADQLTEEQIAEFKEAFSLFDKDGDGTITTKELGTVMRSLGQNPTEAELQDMINEVDADGNGTIDFPEFLTMMARKMKDTDSEEEIREAFRVFDKDGNGFISAAELRHVMTNLGEKLTDEEVDEMIREADIDGDGQVNYEEFVTMMTSK.

Serine 2 is modified (N-acetylserine). 4 EF-hand domains span residues 15–50, 51–86, 88–123, and 124–156; these read EQIA…LGQN, PTEA…KMKD, DSEE…LGEK, and LTDE…MTSK. Ca(2+) contacts are provided by aspartate 28, aspartate 30, aspartate 32, threonine 34, glutamate 39, aspartate 64, aspartate 66, asparagine 68, threonine 70, glutamate 75, aspartate 101, aspartate 103, asparagine 105, and glutamate 112. Lysine 123 carries the N6,N6,N6-trimethyllysine modification. Ca(2+) is bound by residues aspartate 137, aspartate 139, aspartate 141, glutamine 143, and glutamate 148.

The protein belongs to the calmodulin family.

In terms of biological role, calmodulin mediates the control of a large number of enzymes, ion channels and other proteins by Ca(2+). Among the enzymes to be stimulated by the calmodulin-Ca(2+) complex are a number of protein kinases and phosphatases. In Strongylocentrotus intermedius (Sea urchin), this protein is Calmodulin.